A 476-amino-acid chain; its full sequence is Light-independent protochlorophyllide reductase subunit N (476 aa).

[4Fe-4S] cluster is bound by residues C31, C56, and C116.

This sequence belongs to the BchN/ChlN family. Protochlorophyllide reductase is composed of three subunits; ChlL, ChlN and ChlB. Forms a heterotetramer of two ChlB and two ChlN subunits. [4Fe-4S] cluster serves as cofactor.

It is found in the plastid. The protein resides in the chloroplast. It carries out the reaction chlorophyllide a + oxidized 2[4Fe-4S]-[ferredoxin] + 2 ADP + 2 phosphate = protochlorophyllide a + reduced 2[4Fe-4S]-[ferredoxin] + 2 ATP + 2 H2O. The protein operates within porphyrin-containing compound metabolism; chlorophyll biosynthesis (light-independent). In terms of biological role, component of the dark-operative protochlorophyllide reductase (DPOR) that uses Mg-ATP and reduced ferredoxin to reduce ring D of protochlorophyllide (Pchlide) to form chlorophyllide a (Chlide). This reaction is light-independent. The NB-protein (ChlN-ChlB) is the catalytic component of the complex. This Staurastrum punctulatum (Green alga) protein is Light-independent protochlorophyllide reductase subunit N.